Here is a 337-residue protein sequence, read N- to C-terminus: Inositol 2-dehydrogenase (337 aa).

It belongs to the Gfo/Idh/MocA family. In terms of assembly, homotetramer.

It catalyses the reaction myo-inositol + NAD(+) = scyllo-inosose + NADH + H(+). Its function is as follows. Involved in the oxidation of myo-inositol (MI) to 2-keto-myo-inositol (2KMI or 2-inosose). This chain is Inositol 2-dehydrogenase, found in Burkholderia vietnamiensis (strain G4 / LMG 22486) (Burkholderia cepacia (strain R1808)).